The following is a 331-amino-acid chain: Phosphoribosylformylglycinamidine cyclo-ligase (331 aa).

It belongs to the AIR synthase family.

Its subcellular location is the cytoplasm. It catalyses the reaction 2-formamido-N(1)-(5-O-phospho-beta-D-ribosyl)acetamidine + ATP = 5-amino-1-(5-phospho-beta-D-ribosyl)imidazole + ADP + phosphate + H(+). Its pathway is purine metabolism; IMP biosynthesis via de novo pathway; 5-amino-1-(5-phospho-D-ribosyl)imidazole from N(2)-formyl-N(1)-(5-phospho-D-ribosyl)glycinamide: step 2/2. This chain is Phosphoribosylformylglycinamidine cyclo-ligase, found in Clostridium botulinum (strain Loch Maree / Type A3).